The following is a 726-amino-acid chain: Replication restart protein PriA (726 aa).

An ATP-binding site is contributed by I234. Residues 234-373 form the Helicase ATP-binding domain; the sequence is IQSVLYKGVQ…LHRKCFYIKL (140 aa). The short motif at 316–319 is the DEAH box element; the sequence is LEEH. The Zn(2+) site is built by C431, C434, C440, C443, C458, C461, C471, and C474.

Belongs to the helicase family. PriA subfamily. Component of the replication restart primosome. Zn(2+) serves as cofactor.

The enzyme catalyses Couples ATP hydrolysis with the unwinding of duplex DNA by translocating in the 3'-5' direction.. The catalysed reaction is ATP + H2O = ADP + phosphate + H(+). In terms of biological role, initiates the restart of stalled replication forks, which reloads the replicative helicase on sites other than the origin of replication. Recognizes and binds to abandoned replication forks and remodels them to uncover a helicase loading site. Promotes assembly of the primosome at these replication forks. The protein is Replication restart protein PriA of Buchnera aphidicola subsp. Acyrthosiphon pisum (strain APS) (Acyrthosiphon pisum symbiotic bacterium).